The chain runs to 426 residues: Transcriptional enhancer factor TEF-1 (426 aa).

Met-1 carries the N-acetylmethionine modification. The segment covering 1-12 (MEPSSWSGSESP) has biased composition (polar residues). A disordered region spans residues 1-31 (MEPSSWSGSESPAENMERMSDSADKPIDNDA). Residue Ser-11 is modified to Phosphoserine. The segment covering 15–28 (NMERMSDSADKPID) has biased composition (basic and acidic residues). The TEA DNA-binding region spans 28–104 (DNDAEGVWSP…QVLARRKSRD (77 aa)). An N6-lactoyllysine modification is found at Lys-108. Residues 167–426 (GSSQDVKPFV…QHHIYRLVKD (260 aa)) form a transcriptional activation region.

As to quaternary structure, interacts with YAP1 and WWTR1/TAZ. Post-translationally, lactylation by AARS1 promotes nuclear localization and stabilization of YAP1, leading to increased Hippo signaling pathway. Delactylated by SIRT1. In developing skeletal muscle and myocardium, in mitotic neuroblasts both in the brain and spinal cord. At later stages of embryogenesis expressed in several developing structures such as the olfactory system, the intestine, and the kidney.

It is found in the nucleus. Transcription factor which plays a key role in the Hippo signaling pathway, a pathway involved in organ size control and tumor suppression by restricting proliferation and promoting apoptosis. The core of this pathway is composed of a kinase cascade wherein MST1/MST2, in complex with its regulatory protein SAV1, phosphorylates and activates LATS1/2 in complex with its regulatory protein MOB1, which in turn phosphorylates and inactivates YAP1 oncoprotein and WWTR1/TAZ. Acts by mediating gene expression of YAP1 and WWTR1/TAZ, thereby regulating cell proliferation, migration and epithelial mesenchymal transition (EMT) induction. Binds specifically and cooperatively to the SPH and GT-IIC 'enhansons' (5'-GTGGAATGT-3') and activates transcription in vivo in a cell-specific manner. The activation function appears to be mediated by a limiting cell-specific transcriptional intermediary factor (TIF). Involved in cardiac development. Binds to the M-CAT motif. In Mus musculus (Mouse), this protein is Transcriptional enhancer factor TEF-1 (Tead1).